A 254-amino-acid chain; its full sequence is Thiazole synthase (254 aa).

The active-site Schiff-base intermediate with DXP is the Lys-95. 1-deoxy-D-xylulose 5-phosphate is bound by residues Gly-156, 182-183, and 204-205; these read AG and NT.

Belongs to the ThiG family. In terms of assembly, homotetramer. Forms heterodimers with either ThiH or ThiS.

Its subcellular location is the cytoplasm. The enzyme catalyses [ThiS sulfur-carrier protein]-C-terminal-Gly-aminoethanethioate + 2-iminoacetate + 1-deoxy-D-xylulose 5-phosphate = [ThiS sulfur-carrier protein]-C-terminal Gly-Gly + 2-[(2R,5Z)-2-carboxy-4-methylthiazol-5(2H)-ylidene]ethyl phosphate + 2 H2O + H(+). It participates in cofactor biosynthesis; thiamine diphosphate biosynthesis. Catalyzes the rearrangement of 1-deoxy-D-xylulose 5-phosphate (DXP) to produce the thiazole phosphate moiety of thiamine. Sulfur is provided by the thiocarboxylate moiety of the carrier protein ThiS. In vitro, sulfur can be provided by H(2)S. This is Thiazole synthase from Shewanella putrefaciens (strain CN-32 / ATCC BAA-453).